We begin with the raw amino-acid sequence, 453 residues long: Ribosomal protein uS12 methylthiotransferase RimO (453 aa).

One can recognise an MTTase N-terminal domain in the interval 9-124 (PKVGFVSLGC…VMEAVHTHLP (116 aa)). The [4Fe-4S] cluster site is built by cysteine 18, cysteine 54, cysteine 83, cysteine 155, cysteine 159, and cysteine 162. Residues 141 to 382 (LTPKHYAYLK…MEVAERVSAR (242 aa)) form the Radical SAM core domain. Residues 385-453 (QRKVGKTLRV…ADGHDLWGEV (69 aa)) form the TRAM domain.

The protein belongs to the methylthiotransferase family. RimO subfamily. It depends on [4Fe-4S] cluster as a cofactor.

The protein resides in the cytoplasm. It carries out the reaction L-aspartate(89)-[ribosomal protein uS12]-hydrogen + (sulfur carrier)-SH + AH2 + 2 S-adenosyl-L-methionine = 3-methylsulfanyl-L-aspartate(89)-[ribosomal protein uS12]-hydrogen + (sulfur carrier)-H + 5'-deoxyadenosine + L-methionine + A + S-adenosyl-L-homocysteine + 2 H(+). Functionally, catalyzes the methylthiolation of an aspartic acid residue of ribosomal protein uS12. The sequence is that of Ribosomal protein uS12 methylthiotransferase RimO from Ralstonia nicotianae (strain ATCC BAA-1114 / GMI1000) (Ralstonia solanacearum).